The following is a 236-amino-acid chain: Ubiquinone biosynthesis O-methyltransferase (236 aa).

S-adenosyl-L-methionine is bound by residues R36, G56, D77, and M125.

It belongs to the methyltransferase superfamily. UbiG/COQ3 family.

The catalysed reaction is a 3-demethylubiquinol + S-adenosyl-L-methionine = a ubiquinol + S-adenosyl-L-homocysteine + H(+). It catalyses the reaction a 3-(all-trans-polyprenyl)benzene-1,2-diol + S-adenosyl-L-methionine = a 2-methoxy-6-(all-trans-polyprenyl)phenol + S-adenosyl-L-homocysteine + H(+). It functions in the pathway cofactor biosynthesis; ubiquinone biosynthesis. Functionally, O-methyltransferase that catalyzes the 2 O-methylation steps in the ubiquinone biosynthetic pathway. This chain is Ubiquinone biosynthesis O-methyltransferase, found in Glaesserella parasuis serovar 5 (strain SH0165) (Haemophilus parasuis).